The primary structure comprises 775 residues: Semaphorin-3E (775 aa).

Residues 1–25 (MAPAGHILTLLLWGHLLELWTPGHS) form the signal peptide. Residues 32–516 (RLRLSHKELL…SASAVAQVRF (485 aa)) form the Sema domain. A glycan (N-linked (GlcNAc...) asparagine) is linked at Asn-44. Cys-105 and Cys-115 are joined by a disulfide. Asn-126 is a glycosylation site (N-linked (GlcNAc...) asparagine). Residues Cys-133 and Cys-142 are joined by a disulfide bond. N-linked (GlcNAc...) asparagine glycans are attached at residues Asn-175 and Asn-330. Intrachain disulfides connect Cys-270–Cys-382, Cys-294–Cys-342, and Cys-519–Cys-537. One can recognise an Ig-like C2-type domain in the interval 581–669 (ALDRTEERLA…NFVHTVRKIT (89 aa)). The N-linked (GlcNAc...) asparagine glycan is linked to Asn-596. Cysteines 654 and 729 form a disulfide.

It belongs to the semaphorin family. In terms of assembly, interacts with PLXND1. In terms of tissue distribution, detected in neurons in the thalamus. Detected in embryonic vasculature. Developing lungs, developing skeletal elements and ventral horns of the developing neural tube. Correlates positively with tumor progression.

The protein localises to the secreted. Its function is as follows. Plays an important role in signaling via the cell surface receptor PLXND1. Mediates reorganization of the actin cytoskeleton, leading to the retraction of cell projections. Promotes focal adhesion disassembly and inhibits adhesion of endothelial cells to the extracellular matrix. Regulates angiogenesis, both during embryogenesis and after birth. Can down-regulate sprouting angiogenesis. Required for normal vascular patterning during embryogenesis. Plays an important role in ensuring the specificity of synapse formation. This Mus musculus (Mouse) protein is Semaphorin-3E (Sema3e).